A 1022-amino-acid chain; its full sequence is Probable beta-galactosidase B (1022 aa).

The first 20 residues, 1-20 (MARFPQLLFLLLASIGLLSA), serve as a signal peptide directing secretion. Asn23 carries an N-linked (GlcNAc...) asparagine glycan. Tyr90 contributes to the substrate binding site. N-linked (GlcNAc...) asparagine glycosylation occurs at Asn100. Substrate contacts are provided by Asn135, Ala136, Glu137, and Asn195. Glu196 serves as the catalytic Proton donor. Asn211 carries an N-linked (GlcNAc...) asparagine glycan. Tyr265 lines the substrate pocket. Cysteines 271 and 324 form a disulfide. Residue Glu308 is the Nucleophile of the active site. Residue Tyr373 participates in substrate binding. N-linked (GlcNAc...) asparagine glycans are attached at residues Asn411, Asn456, Asn541, Asn554, Asn626, Asn777, Asn790, Asn832, Asn880, and Asn881.

The protein belongs to the glycosyl hydrolase 35 family.

The protein resides in the secreted. It carries out the reaction Hydrolysis of terminal non-reducing beta-D-galactose residues in beta-D-galactosides.. In terms of biological role, cleaves beta-linked terminal galactosyl residues from gangliosides, glycoproteins, and glycosaminoglycans. The polypeptide is Probable beta-galactosidase B (lacB) (Aspergillus terreus (strain NIH 2624 / FGSC A1156)).